The sequence spans 210 residues: Na(+)-translocating NADH-quinone reductase subunit D (210 aa).

A run of 6 helical transmembrane segments spans residues 14–34 (PIIN…ALAV), 42–62 (LVMT…ISLI), 72–92 (IIVQ…VLQA), 96–116 (AISK…IVMG), 131–151 (FMDG…VGVV), and 178–198 (NGLL…IWLI).

This sequence belongs to the NqrDE/RnfAE family. In terms of assembly, composed of six subunits; NqrA, NqrB, NqrC, NqrD, NqrE and NqrF.

It is found in the cell inner membrane. The enzyme catalyses a ubiquinone + n Na(+)(in) + NADH + H(+) = a ubiquinol + n Na(+)(out) + NAD(+). In terms of biological role, NQR complex catalyzes the reduction of ubiquinone-1 to ubiquinol by two successive reactions, coupled with the transport of Na(+) ions from the cytoplasm to the periplasm. NqrA to NqrE are probably involved in the second step, the conversion of ubisemiquinone to ubiquinol. In Shewanella frigidimarina (strain NCIMB 400), this protein is Na(+)-translocating NADH-quinone reductase subunit D.